A 145-amino-acid polypeptide reads, in one-letter code: D-aminoacyl-tRNA deacylase (145 aa).

Positions 137 to 138 match the Gly-cisPro motif, important for rejection of L-amino acids motif; it reads GP.

The protein belongs to the DTD family. In terms of assembly, homodimer.

Its subcellular location is the cytoplasm. The catalysed reaction is glycyl-tRNA(Ala) + H2O = tRNA(Ala) + glycine + H(+). It catalyses the reaction a D-aminoacyl-tRNA + H2O = a tRNA + a D-alpha-amino acid + H(+). An aminoacyl-tRNA editing enzyme that deacylates mischarged D-aminoacyl-tRNAs. Also deacylates mischarged glycyl-tRNA(Ala), protecting cells against glycine mischarging by AlaRS. Acts via tRNA-based rather than protein-based catalysis; rejects L-amino acids rather than detecting D-amino acids in the active site. By recycling D-aminoacyl-tRNA to D-amino acids and free tRNA molecules, this enzyme counteracts the toxicity associated with the formation of D-aminoacyl-tRNA entities in vivo and helps enforce protein L-homochirality. The polypeptide is D-aminoacyl-tRNA deacylase (Pseudomonas entomophila (strain L48)).